A 75-amino-acid polypeptide reads, in one-letter code: UPF0352 protein VIBHAR_03027 (75 aa).

Belongs to the UPF0352 family.

The sequence is that of UPF0352 protein VIBHAR_03027 from Vibrio campbellii (strain ATCC BAA-1116).